A 62-amino-acid chain; its full sequence is Large ribosomal subunit protein uL29 (62 aa).

Belongs to the universal ribosomal protein uL29 family.

This is Large ribosomal subunit protein uL29 from Cytophaga hutchinsonii (strain ATCC 33406 / DSM 1761 / CIP 103989 / NBRC 15051 / NCIMB 9469 / D465).